Here is a 181-residue protein sequence, read N- to C-terminus: Ferritin heavy chain (181 aa).

An N-acetylmethionine modification is found at methionine 1. The residue at position 2 (threonine 2) is an N-acetylthreonine; in Ferritin heavy chain, N-terminally processed. In terms of domain architecture, Ferritin-like diiron spans 11–160 (QNYHQDSEAA…DHITNLRKMG (150 aa)). Glutamate 28, glutamate 63, histidine 66, glutamate 108, and glutamine 142 together coordinate Fe cation. Serine 179 is modified (phosphoserine).

It belongs to the ferritin family. Oligomer of 24 subunits. There are two types of subunits: L (light) chain and H (heavy) chain. The major chain can be light or heavy, depending on the species and tissue type. The functional molecule forms a roughly spherical shell with a diameter of 12 nm and contains a central cavity into which the insoluble mineral iron core is deposited. Interacts with NCOA4; NCOA4 promotes targeting of the iron-binding ferritin complex to autolysosomes following starvation or iron depletion.

Its subcellular location is the cytoplasm. It localises to the lysosome. The protein resides in the cytoplasmic vesicle. It is found in the autophagosome. It carries out the reaction 4 Fe(2+) + O2 + 4 H(+) = 4 Fe(3+) + 2 H2O. Its function is as follows. Stores iron in a soluble, non-toxic, readily available form. Important for iron homeostasis. Has ferroxidase activity. Iron is taken up in the ferrous form and deposited as ferric hydroxides after oxidation. Also plays a role in delivery of iron to cells. Mediates iron uptake in capsule cells of the developing kidney. Delivery to lysosomes is mediated by the cargo receptor NCOA4 for autophagic degradation and release of iron. The polypeptide is Ferritin heavy chain (FTH1) (Bos taurus (Bovine)).